The sequence spans 105 residues: Guanidinium exporter (105 aa).

A helical transmembrane segment spans residues 1-21 (MSWIILLIAGLLEVVWAVGLK). Residues 22-28 (YTHGFSR) are Cytoplasmic-facing. The chain crosses the membrane as a helical span at residues 29 to 49 (LTPSIITITAMVISMALLSWA). The Periplasmic portion of the chain corresponds to 50 to 57 (MKTLPVGT). A helical transmembrane segment spans residues 58–78 (AYAIWTGIGAVGAAITGILLL). Over 79-81 (GES) the chain is Cytoplasmic. Residues 82–102 (ASPARLLSLGLIVAGIIGLKL) traverse the membrane as a helical segment. The Periplasmic segment spans residues 103 to 105 (SAH).

It belongs to the drug/metabolite transporter (DMT) superfamily. Small multidrug resistance (SMR) (TC 2.A.7.1) family. Gdx/SugE subfamily.

The protein resides in the cell inner membrane. Its function is as follows. Guanidinium ion exporter. Couples guanidinium export to the proton motive force, exchanging one guanidinium ion for two protons. The sequence is that of Guanidinium exporter from Salmonella typhi.